Reading from the N-terminus, the 931-residue chain is Aconitate hydratase A (931 aa).

Positions 402–454 (SASPVDEASAESFPASDAPAYGSQENGAGAPQHADGTGAAVPSNPVTVTAPDG) are disordered. [4Fe-4S] cluster-binding residues include Cys472, Cys538, and Cys541.

This sequence belongs to the aconitase/IPM isomerase family. [4Fe-4S] cluster serves as cofactor.

The catalysed reaction is citrate = D-threo-isocitrate. The enzyme catalyses citrate = cis-aconitate + H2O. It catalyses the reaction cis-aconitate + H2O = D-threo-isocitrate. Its pathway is carbohydrate metabolism; tricarboxylic acid cycle; isocitrate from oxaloacetate: step 2/2. Functionally, catalyzes the reversible isomerization of citrate to isocitrate via cis-aconitate in the tricarboxylic acid (TCA) cycle. Aconitase activity is important for the initiation of morphological and physiological differentiation of S.viridochromogenes. In addition, the apo form of AcnA (lacking the [4Fe-4S] cluster) functions as a RNA-binding regulatory protein, which binds to iron responsive elements (IREs) located on the untranslated region of certain mRNAs, including recA and ftsZ. Binding to IRE-like structures probably alters the target mRNA stability and regulates the protein amount. The apo form plays a regulatory role in oxidative stress response. This Streptomyces viridochromogenes (strain DSM 40736 / JCM 4977 / BCRC 1201 / Tue 494) protein is Aconitate hydratase A.